Consider the following 351-residue polypeptide: F-box protein At1g70590 (351 aa).

Positions 1-60 (MKQRTWPCRSEGSRFSSLSFLKPHDKDKRSRISSINKATAKSTTSSRSSSSSSSSRPPSN) are disordered. Over residues 32–41 (ISSINKATAK) the composition is skewed to polar residues. Residues 42–59 (STTSSRSSSSSSSSRPPS) are compositionally biased toward low complexity. Positions 62 to 111 (FGDFSMLPYDILMKIAAPFSHPNLQAASLVCKSWRDALKPLRESMLLIRW) constitute an F-box domain. The stretch at 105-141 (SMLLIRWGKKYKHGRGGVRANLDKALDSFLKGAMRGS) is one Sel1-like repeat. A TPR repeat occupies 142 to 175 (TLAMVDAGLVYWERGEKEKAVNLYRRASELGDAV).

This is F-box protein At1g70590 from Arabidopsis thaliana (Mouse-ear cress).